Consider the following 303-residue polypeptide: Polyisoprenyl-teichoic acid--peptidoglycan teichoic acid transferase TagU (303 aa).

The Cytoplasmic portion of the chain corresponds to Met-1–Lys-4. A helical; Signal-anchor for type II membrane protein membrane pass occupies residues Ile-5 to Tyr-25. Residues Asn-26–Lys-303 are Extracellular-facing.

It belongs to the LytR/CpsA/Psr (LCP) family.

It is found in the cell membrane. It participates in cell wall biogenesis. In terms of biological role, may catalyze the final step in cell wall teichoic acid biosynthesis, the transfer of the anionic cell wall polymers (APs) from their lipid-linked precursor to the cell wall peptidoglycan (PG). This is Polyisoprenyl-teichoic acid--peptidoglycan teichoic acid transferase TagU from Bacillus anthracis (strain A0248).